Reading from the N-terminus, the 360-residue chain is Phospho-N-acetylmuramoyl-pentapeptide-transferase (360 aa).

The next 10 membrane-spanning stretches (helical) occupy residues 21–41, 74–94, 97–117, 134–154, 168–188, 199–219, 236–256, 263–283, 288–308, and 338–358; these read YVTFRAILGLMTALMFSLWWG, MGGILILAGVFISVLLWGDLG, YVWVVLFVLASFGLIGFIDDY, YILQSLAALVIAFYLYASADM, IMPQLGGFFIVLAYFTIVGSS, GLAIMPTVMVAAAFALIAYLS, AGELVIVCTAIVGAGLGFLWF, VFMGDVGSLSLGAALGAIAVL, ILLVIMGGVFVMETVSVILQV, and VIVRFWIISLFLVLLGLATLK.

It belongs to the glycosyltransferase 4 family. MraY subfamily. Requires Mg(2+) as cofactor.

It localises to the cell inner membrane. The catalysed reaction is UDP-N-acetyl-alpha-D-muramoyl-L-alanyl-gamma-D-glutamyl-meso-2,6-diaminopimeloyl-D-alanyl-D-alanine + di-trans,octa-cis-undecaprenyl phosphate = di-trans,octa-cis-undecaprenyl diphospho-N-acetyl-alpha-D-muramoyl-L-alanyl-D-glutamyl-meso-2,6-diaminopimeloyl-D-alanyl-D-alanine + UMP. Its pathway is cell wall biogenesis; peptidoglycan biosynthesis. Functionally, catalyzes the initial step of the lipid cycle reactions in the biosynthesis of the cell wall peptidoglycan: transfers peptidoglycan precursor phospho-MurNAc-pentapeptide from UDP-MurNAc-pentapeptide onto the lipid carrier undecaprenyl phosphate, yielding undecaprenyl-pyrophosphoryl-MurNAc-pentapeptide, known as lipid I. In Shewanella woodyi (strain ATCC 51908 / MS32), this protein is Phospho-N-acetylmuramoyl-pentapeptide-transferase.